Reading from the N-terminus, the 252-residue chain is Triosephosphate isomerase (252 aa).

10-12 serves as a coordination point for substrate; the sequence is NWK. The active-site Electrophile is His96. The active-site Proton acceptor is Glu168. Substrate contacts are provided by residues Gly174, Ser214, and 235–236; that span reads GG.

Belongs to the triosephosphate isomerase family. Homodimer.

The protein resides in the cytoplasm. The enzyme catalyses D-glyceraldehyde 3-phosphate = dihydroxyacetone phosphate. It participates in carbohydrate biosynthesis; gluconeogenesis. The protein operates within carbohydrate degradation; glycolysis; D-glyceraldehyde 3-phosphate from glycerone phosphate: step 1/1. Functionally, involved in the gluconeogenesis. Catalyzes stereospecifically the conversion of dihydroxyacetone phosphate (DHAP) to D-glyceraldehyde-3-phosphate (G3P). The chain is Triosephosphate isomerase from Streptococcus pyogenes serotype M6 (strain ATCC BAA-946 / MGAS10394).